The chain runs to 137 residues: MANQPSAEELKKKLSEMQFYVTQDRGTEPPFTGRLLHNKRDGVYHCLVCDTPLFHSHTKYDSGCGWPSFYQPVSEEAIRYIDDFSHGMQRVEIRCGNCDAHLGHVFPDGPQPTGERYCVNSASLAFSDEKNGDQLKG.

In terms of domain architecture, MsrB spans 7–129 (AEELKKKLSE…NSASLAFSDE (123 aa)). Zn(2+)-binding residues include cysteine 46, cysteine 49, cysteine 95, and cysteine 98. Cysteine 118 functions as the Nucleophile in the catalytic mechanism.

The protein belongs to the MsrB Met sulfoxide reductase family. Zn(2+) serves as cofactor.

It catalyses the reaction L-methionyl-[protein] + [thioredoxin]-disulfide + H2O = L-methionyl-(R)-S-oxide-[protein] + [thioredoxin]-dithiol. The sequence is that of Peptide methionine sulfoxide reductase MsrB from Salmonella dublin (strain CT_02021853).